The chain runs to 336 residues: Phenylalanine--tRNA ligase alpha subunit (336 aa).

Mg(2+) is bound at residue glutamate 257.

This sequence belongs to the class-II aminoacyl-tRNA synthetase family. Phe-tRNA synthetase alpha subunit type 1 subfamily. Tetramer of two alpha and two beta subunits. It depends on Mg(2+) as a cofactor.

It is found in the cytoplasm. The catalysed reaction is tRNA(Phe) + L-phenylalanine + ATP = L-phenylalanyl-tRNA(Phe) + AMP + diphosphate + H(+). The sequence is that of Phenylalanine--tRNA ligase alpha subunit from Xanthomonas campestris pv. campestris (strain 8004).